We begin with the raw amino-acid sequence, 526 residues long: Phosphoenolpyruvate carboxylase (526 aa).

Belongs to the PEPCase type 2 family. As to quaternary structure, homotetramer. Requires Mg(2+) as cofactor.

The enzyme catalyses oxaloacetate + phosphate = phosphoenolpyruvate + hydrogencarbonate. In terms of biological role, catalyzes the irreversible beta-carboxylation of phosphoenolpyruvate (PEP) to form oxaloacetate (OAA), a four-carbon dicarboxylic acid source for the tricarboxylic acid cycle. The sequence is that of Phosphoenolpyruvate carboxylase from Methanosarcina barkeri (strain Fusaro / DSM 804).